We begin with the raw amino-acid sequence, 28 residues long: ELISNSSDALDKTNNSLTIIDSGIGMTK.

ATP-binding residues include Asn-5 and Asp-21.

Belongs to the heat shock protein 90 family. In terms of assembly, homodimer.

It is found in the cytoplasm. Putative molecular chaperone that may promote the maturation, structural maintenance and proper regulation of specific target proteins. The polypeptide is Heat shock protein 81 (Pseudotsuga menziesii (Douglas-fir)).